Here is a 632-residue protein sequence, read N- to C-terminus: Galactan 5-O-arabinofuranosyltransferase (632 aa).

13 helical membrane passes run 10–30, 45–65, 76–96, 162–182, 184–204, 206–226, 242–259, 263–282, 298–318, 344–364, 375–395, 409–429, and 434–454; these read QIVL…IAIA, ALTT…GGVW, LGGL…PLGA, WAIT…WQMI, FEYA…YSSP, PYAA…WSGL, GWAT…AATW, LLAY…ATAL, LAGI…PFLA, FPML…LWLI, ALMI…LTTL, LTVL…QSLA, and AVLS…SQDI. Over 455 to 632 the chain is Extracellular; that stretch reads PNVLRPDLTI…LAIRKPMGNA (178 aa).

The protein belongs to the glycosyltransferase 85 family.

It is found in the cell membrane. The enzyme catalyses Adds an alpha-D-arabinofuranosyl group from trans,octacis-decaprenylphospho-beta-D-arabinofuranose at the 5-O-position of the eighth, tenth and twelfth galactofuranose unit of the galactofuranan chain of [beta-D-galactofuranosyl-(1-&gt;5)-beta-D-galactofuranosyl-(1-&gt;6)]14-beta-D-galactofuranosyl-(1-&gt;5)-beta-D-galactofuranosyl-(1-&gt;4)-alpha-L-rhamnopyranosyl-(1-&gt;3)-N-acetyl-alpha-D-glucosaminyl-diphospho-trans,octacis-decaprenol.. It functions in the pathway cell wall biogenesis; cell wall polysaccharide biosynthesis. In terms of biological role, involved in the biosynthesis of the arabinogalactan (AG) region of the mycolylarabinogalactan-peptidoglycan (mAGP) complex, an essential component of the mycobacterial cell wall. Catalyzes the addition of the first key arabinofuranosyl (Araf) residue from the sugar donor decaprenyl-phospho-arabinose (DPA) on the C-5 of a 6-linked galactofuranosyl (Galf) of the galactan domain, thus 'priming' the galactan for further elaboration by other arabinofuranosyltransferases. This is Galactan 5-O-arabinofuranosyltransferase from Mycobacterium leprae (strain TN).